The following is a 273-amino-acid chain: Phosphate import ATP-binding protein PstB (273 aa).

In terms of domain architecture, ABC transporter spans 27 to 268 (VTVRDLNFYY…PSDRRTQDYI (242 aa)). 59-66 (GPSGCGKS) contacts ATP.

It belongs to the ABC transporter superfamily. Phosphate importer (TC 3.A.1.7) family. The complex is composed of two ATP-binding proteins (PstB), two transmembrane proteins (PstC and PstA) and a solute-binding protein (PstS).

The protein resides in the cell inner membrane. The enzyme catalyses phosphate(out) + ATP + H2O = ADP + 2 phosphate(in) + H(+). Part of the ABC transporter complex PstSACB involved in phosphate import. Responsible for energy coupling to the transport system. The protein is Phosphate import ATP-binding protein PstB of Rhodopseudomonas palustris (strain ATCC BAA-98 / CGA009).